Consider the following 211-residue polypeptide: Peptidyl-prolyl cis-trans isomerase FKBP14 (211 aa).

Positions 1–19 (MRLFLWNAVLTLFVTSLIG) are cleaved as a signal peptide. A disulfide bridge connects residues Cys-38 and Cys-96. In terms of domain architecture, PPIase FKBP-type spans 45–135 (GDLMLVHYEG…IFNIDLLEIR (91 aa)). Positions 135-170 (RNGPRSHESFQEMDLNDDWKLSKDEVKAYLKKEFEK) constitute an EF-hand 1 domain. Residues Asp-148, Asn-150, Asp-152, Lys-154, and Glu-159 each contribute to the Ca(2+) site. The N-linked (GlcNAc...) asparagine glycan is linked to Asn-176. In terms of domain architecture, EF-hand 2 spans 179–211 (HHDALVEDIFDKEDEDKDGFISAREFTYKHDEL). Residues Asp-192, Asp-194, Asp-196, Phe-198, and Glu-203 each contribute to the Ca(2+) site. The Prevents secretion from ER signature appears at 208-211 (HDEL).

In terms of assembly, monomer. Homodimer. Interacts with type III, type IV and type X collagens.

It is found in the endoplasmic reticulum lumen. It catalyses the reaction [protein]-peptidylproline (omega=180) = [protein]-peptidylproline (omega=0). Its activity is regulated as follows. Inhibited by tacrolimus/FK506. Functionally, PPIase which accelerates the folding of proteins during protein synthesis. Has a preference for substrates containing 4-hydroxylproline modifications, including type III collagen. May also target type VI and type X collagens. This chain is Peptidyl-prolyl cis-trans isomerase FKBP14 (FKBP14), found in Homo sapiens (Human).